The primary structure comprises 50 residues: Penaeidin-1 (50 aa).

Cystine bridges form between Cys-25–Cys-38, Cys-27–Cys-45, and Cys-39–Cys-46.

In terms of tissue distribution, higher expression in hemocytes and to a lesser extent in heart, testis, gills, intestine, lymphoid organ and hepatopancreas. Traces in eyes and subcuticular epithelium. Not present in the brain.

The protein resides in the cytoplasmic granule. Its function is as follows. Antibacterial activity against M.luteus and E.coli bacteria. Antifungal activity against N.crassa and F.oxysporum. Presents chitin-binding activity. In Penaeus vannamei (Whiteleg shrimp), this protein is Penaeidin-1.